A 540-amino-acid polypeptide reads, in one-letter code: 2,3-bisphosphoglycerate-independent phosphoglycerate mutase (540 aa).

Positions 24 and 74 each coordinate Mn(2+). Residue Ser74 is the Phosphoserine intermediate of the active site. Residues His135, 165 to 166 (RD), Arg197, Arg203, 268 to 271 (RPDR), and Lys341 contribute to the substrate site. Residues Asp408, His412, Asp449, His450, and His467 each contribute to the Mn(2+) site.

Belongs to the BPG-independent phosphoglycerate mutase family. In terms of assembly, monomer. Mn(2+) serves as cofactor.

It catalyses the reaction (2R)-2-phosphoglycerate = (2R)-3-phosphoglycerate. Its pathway is carbohydrate degradation; glycolysis; pyruvate from D-glyceraldehyde 3-phosphate: step 3/5. Catalyzes the interconversion of 2-phosphoglycerate and 3-phosphoglycerate. In Prochlorococcus marinus (strain MIT 9303), this protein is 2,3-bisphosphoglycerate-independent phosphoglycerate mutase.